A 340-amino-acid polypeptide reads, in one-letter code: Phospho-N-acetylmuramoyl-pentapeptide-transferase (340 aa).

Transmembrane regions (helical) follow at residues 24–44, 69–89, 95–115, 129–149, 156–176, 196–216, 235–255, 260–280, and 316–336; these read VPFG…LPVL, TMGG…GSGW, AVAL…WLVI, LLLQ…QGIP, GIGA…VLVG, ALVL…LVAF, LFMG…LALL, WALA…ILQV, and VVGC…AWWH.

It belongs to the glycosyltransferase 4 family. MraY subfamily. The cofactor is Mg(2+).

Its subcellular location is the cell inner membrane. It carries out the reaction UDP-N-acetyl-alpha-D-muramoyl-L-alanyl-gamma-D-glutamyl-meso-2,6-diaminopimeloyl-D-alanyl-D-alanine + di-trans,octa-cis-undecaprenyl phosphate = di-trans,octa-cis-undecaprenyl diphospho-N-acetyl-alpha-D-muramoyl-L-alanyl-D-glutamyl-meso-2,6-diaminopimeloyl-D-alanyl-D-alanine + UMP. It participates in cell wall biogenesis; peptidoglycan biosynthesis. Its function is as follows. Catalyzes the initial step of the lipid cycle reactions in the biosynthesis of the cell wall peptidoglycan: transfers peptidoglycan precursor phospho-MurNAc-pentapeptide from UDP-MurNAc-pentapeptide onto the lipid carrier undecaprenyl phosphate, yielding undecaprenyl-pyrophosphoryl-MurNAc-pentapeptide, known as lipid I. The chain is Phospho-N-acetylmuramoyl-pentapeptide-transferase from Synechococcus sp. (strain JA-3-3Ab) (Cyanobacteria bacterium Yellowstone A-Prime).